The primary structure comprises 407 residues: Serine hydroxymethyltransferase (407 aa).

Pyridoxal 5'-phosphate is bound by residues tyrosine 51 and 94 to 95; that span reads GS. Residues leucine 117 and 121–123 each bind (6S)-5,6,7,8-tetrahydrofolate; that span reads GHL. Residues serine 172, histidine 200, and histidine 225 each coordinate pyridoxal 5'-phosphate. The residue at position 226 (lysine 226) is an N6-(pyridoxal phosphate)lysine. Glutamate 242 contributes to the (6S)-5,6,7,8-tetrahydrofolate binding site. Glycine 258 is a pyridoxal 5'-phosphate binding site.

The protein belongs to the SHMT family. In terms of assembly, homodimer. It depends on pyridoxal 5'-phosphate as a cofactor.

The protein localises to the cytoplasm. It catalyses the reaction (6R)-5,10-methylene-5,6,7,8-tetrahydrofolate + glycine + H2O = (6S)-5,6,7,8-tetrahydrofolate + L-serine. Its pathway is one-carbon metabolism; tetrahydrofolate interconversion. It participates in amino-acid biosynthesis; glycine biosynthesis; glycine from L-serine: step 1/1. Functionally, catalyzes the reversible interconversion of serine and glycine with tetrahydrofolate (THF) serving as the one-carbon carrier. This reaction serves as the major source of one-carbon groups required for the biosynthesis of purines, thymidylate, methionine, and other important biomolecules. Also exhibits THF-independent aldolase activity toward beta-hydroxyamino acids, producing glycine and aldehydes, via a retro-aldol mechanism. The sequence is that of Serine hydroxymethyltransferase from Thermus thermophilus (strain ATCC 27634 / DSM 579 / HB8).